The following is a 132-amino-acid chain: Small ribosomal subunit protein uS13 (132 aa).

Residues 106–132 (PVRGQVTQKNARTRKGPRKTVAGKKGK) are disordered. The segment covering 116–132 (ARTRKGPRKTVAGKKGK) has biased composition (basic residues).

The protein belongs to the universal ribosomal protein uS13 family. Part of the 30S ribosomal subunit. Forms a loose heterodimer with protein S19. Forms two bridges to the 50S subunit in the 70S ribosome.

Its function is as follows. Located at the top of the head of the 30S subunit, it contacts several helices of the 16S rRNA. In the 70S ribosome it contacts the 23S rRNA (bridge B1a) and protein L5 of the 50S subunit (bridge B1b), connecting the 2 subunits; these bridges are implicated in subunit movement. Contacts the tRNAs in the A and P-sites. This chain is Small ribosomal subunit protein uS13, found in Mycoplasmopsis pulmonis (strain UAB CTIP) (Mycoplasma pulmonis).